A 392-amino-acid chain; its full sequence is 23S rRNA (uracil(747)-C(5))-methyltransferase RlmC (392 aa).

Residues cysteine 4, cysteine 12, cysteine 15, and cysteine 93 each contribute to the [4Fe-4S] cluster site. Residues glutamine 218, phenylalanine 247, glutamate 275, and asparagine 321 each coordinate S-adenosyl-L-methionine. Cysteine 348 acts as the Nucleophile in catalysis.

It belongs to the class I-like SAM-binding methyltransferase superfamily. RNA M5U methyltransferase family. RlmC subfamily.

It carries out the reaction uridine(747) in 23S rRNA + S-adenosyl-L-methionine = 5-methyluridine(747) in 23S rRNA + S-adenosyl-L-homocysteine + H(+). In terms of biological role, catalyzes the formation of 5-methyl-uridine at position 747 (m5U747) in 23S rRNA. The protein is 23S rRNA (uracil(747)-C(5))-methyltransferase RlmC of Haemophilus influenzae (strain PittEE).